The sequence spans 216 residues: UPF0193 protein EVG1 homolog (216 aa).

The protein belongs to the UPF0193 (EVG1) family.

The polypeptide is UPF0193 protein EVG1 homolog (Mus musculus (Mouse)).